Consider the following 503-residue polypeptide: Activin receptor type-1-like (503 aa).

The signal sequence occupies residues 1–21 (MTLGSPRKGLLMLLMALVTQG). Over 22 to 118 (DPVKPSRGPL…PSEQPGTDGQ (97 aa)) the chain is Extracellular. 3 cysteine pairs are disulfide-bonded: cysteine 34–cysteine 51, cysteine 36–cysteine 41, and cysteine 46–cysteine 69. Residues 73-76 (HREL) are mediates specificity for BMP ligand. Disulfide bonds link cysteine 77/cysteine 89 and cysteine 90/cysteine 95. Residue asparagine 98 is glycosylated (N-linked (GlcNAc...) asparagine). The chain crosses the membrane as a helical span at residues 119–141 (LALILGPVLALLALVALGVLGLW). Topologically, residues 142 to 503 (HVRRRQEKQR…NSPEKPKVIQ (362 aa)) are cytoplasmic. Residues serine 155, serine 160, and serine 161 each carry the phosphoserine modification. A GS domain is found at 172-201 (SMLGDLLDSDCTTGSGSGLPFLVQRTVARQ). The 291-residue stretch at 202 to 492 (VALVECVGKG…LRIKKTLQKI (291 aa)) folds into the Protein kinase domain. ATP-binding positions include 208 to 216 (VGKGRYGEV) and lysine 229. Aspartate 330 (proton acceptor) is an active-site residue.

This sequence belongs to the protein kinase superfamily. TKL Ser/Thr protein kinase family. TGFB receptor subfamily. In terms of assembly, interacts with TSC22D1/TSC-22. Requires Mg(2+) as cofactor. Mn(2+) serves as cofactor.

It is found in the cell membrane. The catalysed reaction is L-threonyl-[receptor-protein] + ATP = O-phospho-L-threonyl-[receptor-protein] + ADP + H(+). It catalyses the reaction L-seryl-[receptor-protein] + ATP = O-phospho-L-seryl-[receptor-protein] + ADP + H(+). In terms of biological role, type I receptor for TGF-beta family ligands BMP9/GDF2 and BMP10 and important regulator of normal blood vessel development. On ligand binding, forms a receptor complex consisting of two type II and two type I transmembrane serine/threonine kinases. Type II receptors phosphorylate and activate type I receptors which autophosphorylate, then bind and activate SMAD transcriptional regulators. May bind activin as well. This Homo sapiens (Human) protein is Activin receptor type-1-like (ACVRL1).